Reading from the N-terminus, the 239-residue chain is Uridylate kinase (239 aa).

Position 10–13 (10–13 (KFSG)) interacts with ATP. Residues 18–23 (GENGFG) form an involved in allosteric activation by GTP region. Position 52 (Gly52) interacts with UMP. ATP-binding residues include Gly53 and Arg57. Residues Asp73 and 134–141 (TGNPYFTT) each bind UMP. Thr161, Tyr167, and Asp170 together coordinate ATP.

It belongs to the UMP kinase family. As to quaternary structure, homohexamer.

Its subcellular location is the cytoplasm. It carries out the reaction UMP + ATP = UDP + ADP. It participates in pyrimidine metabolism; CTP biosynthesis via de novo pathway; UDP from UMP (UMPK route): step 1/1. Allosterically activated by GTP. Inhibited by UTP. Functionally, catalyzes the reversible phosphorylation of UMP to UDP. This is Uridylate kinase from Campylobacter jejuni subsp. jejuni serotype O:2 (strain ATCC 700819 / NCTC 11168).